A 1040-amino-acid polypeptide reads, in one-letter code: Vitamin B12-dependent ribonucleotide reductase (1040 aa).

Substrate is bound by residues S169, 213 to 214 (AC), G242, 420 to 424 (NPCSE), and 604 to 608 (PTGTI). A disulfide bond links C214 and C433. N420 functions as the Proton acceptor in the catalytic mechanism. C422 serves as the catalytic Cysteine radical intermediate. E424 functions as the Proton acceptor in the catalytic mechanism. Disordered stretches follow at residues 909–932 (SAEG…GATA) and 969–988 (GSAT…SDGA). Polar residues predominate over residues 969-979 (GSATNGHSNGQ).

This sequence belongs to the ribonucleoside diphosphate reductase class-2 family. Adenosylcob(III)alamin is required as a cofactor.

It carries out the reaction a 2'-deoxyribonucleoside 5'-diphosphate + [thioredoxin]-disulfide + H2O = a ribonucleoside 5'-diphosphate + [thioredoxin]-dithiol. Functionally, catalyzes the reduction of ribonucleotides to deoxyribonucleotides. May function to provide a pool of deoxyribonucleotide precursors for DNA repair during oxygen limitation and/or for immediate growth after restoration of oxygen. This chain is Vitamin B12-dependent ribonucleotide reductase (nrdJ), found in Rhodopirellula baltica (strain DSM 10527 / NCIMB 13988 / SH1).